Reading from the N-terminus, the 481-residue chain is uncharacterized protein (481 aa).

Helical transmembrane passes span 32 to 52 (LSWL…YWGV), 82 to 102 (FFHW…IMAY), 137 to 157 (MFLI…AATF), 173 to 193 (VQAF…WIGI), 204 to 224 (VGWG…TEFI), 258 to 278 (WTVF…MFVT), 289 to 309 (VIWG…GVME), 348 to 368 (LFLA…MDAV), 392 to 412 (LFWC…GASL), and 418 to 438 (TVVL…GGFI).

Belongs to the BCCT transporter (TC 2.A.15) family.

It is found in the cell inner membrane. Its function is as follows. Probable transporter whose substrate is unknown. Is not involved in aerobic D-malate transport. This is an uncharacterized protein from Escherichia coli (strain K12).